A 70-amino-acid chain; its full sequence is DNA-directed RNA polymerase subunit omega (70 aa).

The protein belongs to the RNA polymerase subunit omega family. As to quaternary structure, the RNAP catalytic core consists of 2 alpha, 1 beta, 1 beta' and 1 omega subunit. When a sigma factor is associated with the core the holoenzyme is formed, which can initiate transcription.

The enzyme catalyses RNA(n) + a ribonucleoside 5'-triphosphate = RNA(n+1) + diphosphate. Functionally, promotes RNA polymerase assembly. Latches the N- and C-terminal regions of the beta' subunit thereby facilitating its interaction with the beta and alpha subunits. This chain is DNA-directed RNA polymerase subunit omega, found in Bacillus cytotoxicus (strain DSM 22905 / CIP 110041 / 391-98 / NVH 391-98).